The following is a 955-amino-acid chain: Translation initiation factor IF-2 (955 aa).

The disordered stretch occupies residues 49–352; it reads AFSQSSESTE…QAPSFGGVKI (304 aa). A compositionally biased stretch (low complexity) spans 77–88; sequence PQQQTKASAPSA. Pro residues-rich tracts occupy residues 95–121, 149–159, 188–202, and 209–223; these read PAVP…PGPR, RPVPKPGPRPG, RPGP…PPRP, and PPRP…PRPG. The span at 225–235 shows a compositional bias: gly residues; that stretch reads GTAGGRPGSSA. Over residues 238–264 the composition is skewed to pro residues; sequence PPRPVPRPGPRPSPMNMPASRPTPPGG. Gly residues predominate over residues 273–322; sequence SGGGRGRGGGGGAGPRGGGAGGGAPRTGFGGRPGGGRGRGGTAGAFGRPG. Positions 326–335 are enriched in basic residues; the sequence is SRSRKSKKQR. A tr-type G domain is found at 448 to 620; the sequence is PRAPVVTVMG…IILTADAELD (173 aa). A G1 region spans residues 457-464; sequence GHVDHGKT. 457 to 464 serves as a coordination point for GTP; that stretch reads GHVDHGKT. The segment at 482 to 486 is G2; the sequence is GITQH. The segment at 507 to 510 is G3; the sequence is DTPG. GTP contacts are provided by residues 507-511 and 561-564; these read DTPGH and NKID. The G4 stretch occupies residues 561 to 564; that stretch reads NKID. The tract at residues 597-599 is G5; that stretch reads SAK.

Belongs to the TRAFAC class translation factor GTPase superfamily. Classic translation factor GTPase family. IF-2 subfamily.

It localises to the cytoplasm. Functionally, one of the essential components for the initiation of protein synthesis. Protects formylmethionyl-tRNA from spontaneous hydrolysis and promotes its binding to the 30S ribosomal subunits. Also involved in the hydrolysis of GTP during the formation of the 70S ribosomal complex. The chain is Translation initiation factor IF-2 from Thermobifida fusca (strain YX).